A 236-amino-acid polypeptide reads, in one-letter code: Terpene cyclase andB (236 aa).

Helical transmembrane passes span 13–33, 45–65, 70–90, 106–126, 135–155, 166–186, and 200–220; these read TVVNLLGSASGIGWILNYILM, MSMLPLCCNIAWEFVYGILCP, VVRPVILSWLVLNCLVVYAAI, HLPLLFTVGIAACTGFHIALI, FLWSARSCQVLLSIGGLFQLL, VLWLSRFLGSICGVLKMTLMW, and LTAYCIALWIISDVLYGVVFY.

This sequence belongs to the paxB family.

It is found in the membrane. The protein operates within secondary metabolite biosynthesis; terpenoid biosynthesis. Functionally, terpene cyclase; part of the gene cluster that mediates the biosynthesis of anditomin, a fungal meroterpenoid. The first step of the pathway is the synthesis of 3,5-dimethylorsellinic acid (DMOA) by the polyketide synthase andM. DMOA is then converted to the phthalide compound 5,7-dihydroxy-4,6-dimethylphthalide (DHDMP) by the cytochrome P450 monooxygenase andK, which is further prenylated by the prenyltransferase andD to yield farnesyl-DHDMP. Further epoxidation by the FAD-dependent monooxygenase andE leads to epoxyfarnesyl-DHDMP. The next step involves the terpene cyclase andB that converts epoxyfarnesyl-DHDMP into preandiloid A through opening of the epoxide ring followed by the cyclization of the farnesyl moiety. Preandiloid A is in turn oxidized at the C-3 hydroxyl group to yield preandiloid B by the dehydrogenase andC. The dioxygenase andA is solely responsible for the dehydrogenation of preandiloid B leading to the enone preandiloid C, as well as for the intriguing structural rearrangement to generate the bicyclo[2.2.2]octane core, transforming preandiloid C into andiconin. FAD-binding monooxygenase andJ then produces andilesin D which is reduced by dehydrogenase andI to yield andilesin A. Action of acetyltransferase andG followed by a spontaneous acetate elimination leads then to andilesin B, which is in turn substrate of the short chain dehydrogenase andH to yield andilesin C. Finally, the dioxygenase andF catalyzes the transformation of andilesin C to anditomin. This chain is Terpene cyclase andB, found in Emericella variicolor (Aspergillus stellatus).